The sequence spans 289 residues: T-cell ecto-ADP-ribosyltransferase 2 (289 aa).

The first 20 residues, M1–G20, serve as a signal peptide directing secretion. Disulfide bonds link C41–C246 and C141–C193. One can recognise a TR mART core domain in the interval E61–K241. An N-linked (GlcNAc...) asparagine glycan is attached at N79. Y98, R146, and Q164 together coordinate NAD(+). R146 is a catalytic residue. S167 is a catalytic residue. Residue S202 coordinates NAD(+). The active site involves E209. A glycan (N-linked (GlcNAc...) asparagine) is linked at N249. A lipid anchor (GPI-anchor amidated serine) is attached at S260. Residues I261–L289 constitute a propeptide, removed in mature form.

This sequence belongs to the Arg-specific ADP-ribosyltransferase family. As to expression, expressed in spleen, intestine and thymus.

It localises to the cell membrane. It carries out the reaction L-arginyl-[protein] + NAD(+) = N(omega)-(ADP-D-ribosyl)-L-arginyl-[protein] + nicotinamide + H(+). The catalysed reaction is NAD(+) + H2O = ADP-D-ribose + nicotinamide + H(+). Has both NAD(+) glycohydrolase and ADP-ribosyltransferase activity. The chain is T-cell ecto-ADP-ribosyltransferase 2 (Art2b) from Mus musculus (Mouse).